A 360-amino-acid polypeptide reads, in one-letter code: MGQRTLLYDLHLALGAKTVDFGGWDMPLHYGSQVEEHHQVRSDCGVFDVSHMTVIDVDGTDATVWLQRLLANDVARLDDPGKALYSPLLNEQGGVIDDLIVYRTETGYRLVTNAATRAKVLDWLQLQRAGFSVDFQVRPDLAILAIQGPRAREKVAALLSPARAALIRELRPFEGVADGDWFIARTGYTGEDGLEIIFPGDQAVAFFNDLVGAGIAPSGLGARDTLRLEAGMNLYGQDIDENHTPLTSNLGWSIAWEPAERNFIGRVGLLAEIEHGVQEKLVGLVLEERGVLRAHQVVRVAGIGEGEITSGSFSPTLSKSIALARVPMATGDRAEVEIRGKWYPVRVVKPTFVRHGKILI.

It belongs to the GcvT family. In terms of assembly, the glycine cleavage system is composed of four proteins: P, T, L and H.

It carries out the reaction N(6)-[(R)-S(8)-aminomethyldihydrolipoyl]-L-lysyl-[protein] + (6S)-5,6,7,8-tetrahydrofolate = N(6)-[(R)-dihydrolipoyl]-L-lysyl-[protein] + (6R)-5,10-methylene-5,6,7,8-tetrahydrofolate + NH4(+). Functionally, the glycine cleavage system catalyzes the degradation of glycine. This is Aminomethyltransferase from Pseudomonas putida (strain ATCC 47054 / DSM 6125 / CFBP 8728 / NCIMB 11950 / KT2440).